The chain runs to 896 residues: Protein translocase subunit SecA (896 aa).

Residues Q87, 105–109, and D512 contribute to the ATP site; that span reads GEGKT. A disordered region spans residues 867 to 889; the sequence is QEPARSNRVAGRNDPCPCGSGKK. Zn(2+) is bound by residues C882, C884, C893, and C894.

It belongs to the SecA family. In terms of assembly, monomer and homodimer. Part of the essential Sec protein translocation apparatus which comprises SecA, SecYEG and auxiliary proteins SecDF-YajC and YidC. It depends on Zn(2+) as a cofactor.

Its subcellular location is the cell inner membrane. It is found in the cytoplasm. It carries out the reaction ATP + H2O + cellular proteinSide 1 = ADP + phosphate + cellular proteinSide 2.. Part of the Sec protein translocase complex. Interacts with the SecYEG preprotein conducting channel. Has a central role in coupling the hydrolysis of ATP to the transfer of proteins into and across the cell membrane, serving as an ATP-driven molecular motor driving the stepwise translocation of polypeptide chains across the membrane. The chain is Protein translocase subunit SecA from Pelobacter propionicus (strain DSM 2379 / NBRC 103807 / OttBd1).